A 466-amino-acid chain; its full sequence is MAKTLYEKLFDAHVVFEAPNETPLLYIDRHLVHEVTSPQAFDGLRAHHRPVRQPGKTFATMDHNVSTQTKDINASGEMARIQMQELIKNCNEFGVELYDLNHPYQGIVHVMGPEQGVTLPGMTIVCGDSHTATHGAFGALAFGIGTSEVEHVLATQTLKQGRAKTMKIEVTGSAAPGITAKDIVLAIIGKTGSAGGTGHVVEFCGDAIRALSMEGRMTLCNMAIEMGAKAGLVAPDETTFNYVKGRLHAPKGCDFDEAVEYWKTLKTDDGATFDTVVTLRAEEIAPQVTWGTNPGQVISVTDIIPDPASFSDPVERASAEKALAYMGLQPGVPLTDVAIDKVFIGSCTNSRIEDLRAAAEVAKGRKVAPGVQALVVPGSGPVKAQAEAEGLDKIFIEAGFEWRLPGCSMCLAMNNDRLNPGERCASTSNRNFEGRQGRGGRTHLVSPAMAAAAAVTGHFADIRSIK.

Cys-347, Cys-407, and Cys-410 together coordinate [4Fe-4S] cluster.

This sequence belongs to the aconitase/IPM isomerase family. LeuC type 1 subfamily. As to quaternary structure, heterodimer of LeuC and LeuD. [4Fe-4S] cluster serves as cofactor.

The enzyme catalyses (2R,3S)-3-isopropylmalate = (2S)-2-isopropylmalate. The protein operates within amino-acid biosynthesis; L-leucine biosynthesis; L-leucine from 3-methyl-2-oxobutanoate: step 2/4. Functionally, catalyzes the isomerization between 2-isopropylmalate and 3-isopropylmalate, via the formation of 2-isopropylmaleate. This chain is 3-isopropylmalate dehydratase large subunit, found in Salmonella paratyphi A (strain ATCC 9150 / SARB42).